A 367-amino-acid polypeptide reads, in one-letter code: UDP-N-acetylenolpyruvoylglucosamine reductase (367 aa).

One can recognise an FAD-binding PCMH-type domain in the interval 29-205; sequence VGPVAQRVIT…LEVEFKLDAS (177 aa). Arg177 is a catalytic residue. Ser260 functions as the Proton donor in the catalytic mechanism. Residue Glu359 is part of the active site.

It belongs to the MurB family. The cofactor is FAD.

Its subcellular location is the cytoplasm. It catalyses the reaction UDP-N-acetyl-alpha-D-muramate + NADP(+) = UDP-N-acetyl-3-O-(1-carboxyvinyl)-alpha-D-glucosamine + NADPH + H(+). Its pathway is cell wall biogenesis; peptidoglycan biosynthesis. Functionally, cell wall formation. The polypeptide is UDP-N-acetylenolpyruvoylglucosamine reductase (Mycobacterium leprae (strain Br4923)).